The chain runs to 407 residues: Formamidase (407 aa).

In terms of assembly, homotrimer.

The enzyme catalyses formamide + H2O = formate + NH4(+). In terms of biological role, hydrolyzes formamide with the production of ammonia which can be used as a source of nitrogen for growth. Also acts, more slowly, on acetamide, propanamide and butanamide. This Methylophilus methylotrophus (Bacterium W3A1) protein is Formamidase (fmdA).